The following is a 387-amino-acid chain: 3-hydroxy-D-aspartate aldolase (387 aa).

Lys62 carries the N6-(pyridoxal phosphate)lysine modification. Gln85 contributes to the pyridoxal 5'-phosphate binding site. The segment at 199–228 (HGQLRGPQGQAGRRHCPGERGRGRAGGRGL) is disordered. Pyridoxal 5'-phosphate-binding positions include Thr238, 256 to 257 (GS), and Tyr265. Residues His355 and Asp357 each contribute to the Mg(2+) site.

Belongs to the DSD1 family. In terms of assembly, homodimer. The cofactor is pyridoxal 5'-phosphate. Requires Mn(2+) as cofactor. It depends on Mg(2+) as a cofactor. Co(2+) is required as a cofactor.

It catalyses the reaction (3S)-3-hydroxy-D-aspartate = glyoxylate + glycine. The catalysed reaction is (3R)-3-hydroxy-D-aspartate = glyoxylate + glycine. Functionally, catalyzes the condensation of glyoxylate and glycine into (2R,3S)-beta-hydroxyaspartate ((3S)-3-hydroxy-D-aspartate). Functions in glyoxylate assimilation via the beta-hydroxyaspartate cycle (BHAC). In vitro catalyzes the cleavage of both D-erythro- and D-threo-3-hydroxyaspartate to glycine and glyoxylate. Also acts on D-threonine, D-3-phenylserine and D-3-3,4-methylenedioxyphenylserine. This Paracoccus denitrificans protein is 3-hydroxy-D-aspartate aldolase (dhaa).